Consider the following 120-residue polypeptide: Small ribosomal subunit protein uS13 (120 aa).

Residues 96–120 (PCRGQRTRTNARTRKGPRKAIAGKK) are disordered.

The protein belongs to the universal ribosomal protein uS13 family. Part of the 30S ribosomal subunit. Forms a loose heterodimer with protein S19. Forms two bridges to the 50S subunit in the 70S ribosome.

Located at the top of the head of the 30S subunit, it contacts several helices of the 16S rRNA. In the 70S ribosome it contacts the 23S rRNA (bridge B1a) and protein L5 of the 50S subunit (bridge B1b), connecting the 2 subunits; these bridges are implicated in subunit movement. Contacts the tRNAs in the A and P-sites. The protein is Small ribosomal subunit protein uS13 of Chromobacterium violaceum (strain ATCC 12472 / DSM 30191 / JCM 1249 / CCUG 213 / NBRC 12614 / NCIMB 9131 / NCTC 9757 / MK).